The chain runs to 202 residues: Holliday junction resolvase RecU (202 aa).

Mg(2+)-binding residues include T85, D87, E100, and Q119.

This sequence belongs to the RecU family. Mg(2+) serves as cofactor.

The protein resides in the cytoplasm. The enzyme catalyses Endonucleolytic cleavage at a junction such as a reciprocal single-stranded crossover between two homologous DNA duplexes (Holliday junction).. In terms of biological role, endonuclease that resolves Holliday junction intermediates in genetic recombination. Cleaves mobile four-strand junctions by introducing symmetrical nicks in paired strands. Promotes annealing of linear ssDNA with homologous dsDNA. Required for DNA repair, homologous recombination and chromosome segregation. This Streptococcus pyogenes serotype M6 (strain ATCC BAA-946 / MGAS10394) protein is Holliday junction resolvase RecU.